An 867-amino-acid chain; its full sequence is MVASARVQKLVRRYKLAIATALAILLLQGLVVWSFSVLEDDEPGEKGRQKKSRPLDPSEGSKDTDSSAGRRGSAGRRHGRWRGRAESPGVPVAKVVRAVTSRHRTGRRIPPTPPPEAPGRQNLSGAAAEEALVGAAGFPHGDTGSVEGAPQPTDNSFTPKCEIVGKDALSALARASSKQCQQEIANVVCLHQAGSLMPKAVPRHCQRAGKMSPGIPWDEVRAQQPADGPPVRIAYMLVVHGRAIRQLKRLLKAVYHKQHFFYVHVDERSNYLHREVVELARQYDNVRVTPWRMVTIWGGASLLRMYLRSMQDLLEVPGWAWDFFINLSATDYPTRTNEELVAFLSKNRDKNFLKSHGRDNSRFIKKQGLDRLFHECDSHMWRLGERQIPAGIVVDGGSDWFVLTRSFVEYVVYTDDPLVAQLRQFYTYTLLPAESFFHTVLEISPACESLVDNNMRVTTWNRKMGSKSQYKHIVDWCGCSPNDFKPQDFLRLQQTARPTFFARKFEAVVNQEIIGQLDYYLYGNYPAGTPGLRSYWENVYDEPDGIHSLSDVTLTLYHSFSRLGLRRAEASLRAPGESSCRFEPRGLPSSVHLYFYDDHFQGYLVTQAVQSSAQGPAETLEMWLMPQGSLKLLGHSDQASRLQSLEVGQVGTEWDPKERLFRNFGGLLGPLDEPVAMQRWARGPNLTVTVVWIDPTYVVATSYDIVVDAETEVTQYKPPLSRPLRPGAWTVRLLQFWEPLGETRFLVLPLTFNRKLPLRKGKFSQMIAGPPHNEYMEQSFQGLSGILNLPQLEPAEEAARLHAELTGPALEAWTDGEQSSFWSVAGVCAVGPSACPSLELCRLTSWSSLSPDPKSELGPVKADGRLR.

Residues 1–15 are Cytoplasmic-facing; the sequence is MVASARVQKLVRRYK. The helical; Signal-anchor for type II membrane protein transmembrane segment at 16 to 36 threads the bilayer; sequence LAIATALAILLLQGLVVWSFS. Topologically, residues 37–867 are lumenal; sequence VLEDDEPGEK…GPVKADGRLR (831 aa). Residues 41 to 122 form a disordered region; it reads DEPGEKGRQK…PPPEAPGRQN (82 aa). Residues 53–65 are compositionally biased toward basic and acidic residues; sequence RPLDPSEGSKDTD. Basic residues predominate over residues 73-82; the sequence is SAGRRHGRWR. The N-linked (GlcNAc...) asparagine glycan is linked to asparagine 122. 2 disulfides stabilise this stretch: cysteine 161-cysteine 189 and cysteine 205-cysteine 447. Residues valine 238, aspartate 266, and 295–297 contribute to the UDP-alpha-D-xylose site; that span reads TIW. Asparagine 326 carries N-linked (GlcNAc...) asparagine glycosylation. UDP-alpha-D-xylose contacts are provided by residues 399 to 400, serine 480, and 503 to 504; these read DW and RK. Intrachain disulfides connect cysteine 580/cysteine 835 and cysteine 828/cysteine 841. Asparagine 685 carries N-linked (GlcNAc...) asparagine glycosylation.

This sequence belongs to the glycosyltransferase 14 family. XylT subfamily. As to quaternary structure, monomer. The cofactor is Mg(2+). Mn(2+) is required as a cofactor. Contains disulfide bonds.

The protein localises to the golgi apparatus membrane. Its subcellular location is the secreted. It catalyses the reaction UDP-alpha-D-xylose + L-seryl-[protein] = 3-O-(beta-D-xylosyl)-L-seryl-[protein] + UDP + H(+). It functions in the pathway glycan metabolism; chondroitin sulfate biosynthesis. It participates in glycan metabolism; heparan sulfate biosynthesis. Catalyzes the first step in the biosynthesis of chondroitin sulfate, heparan sulfate and dermatan sulfate proteoglycans, such as DCN. Transfers D-xylose from UDP-D-xylose to specific serine residues of the core protein. The polypeptide is Xylosyltransferase 2 (XYLT2) (Bos taurus (Bovine)).